A 392-amino-acid chain; its full sequence is Meiotically up-regulated gene 11 protein (392 aa).

The protein resides in the cytoplasm. Its subcellular location is the nucleus. Its function is as follows. Has a role in meiosis. The chain is Meiotically up-regulated gene 11 protein (mug11) from Schizosaccharomyces pombe (strain 972 / ATCC 24843) (Fission yeast).